Reading from the N-terminus, the 347-residue chain is MSDRLTLLRPDDWHIHLRDGAVLPHTVADVARTFGRAIIMPNLVPPVRNAQQADAYRQRILAARPAGSRFEPLMVLYLTDQTTPEDIRTAKASGFVHAAKLYPAGATTNSDSGVTSIDKIFPALEAMAEVGMLLLVHGEVTRGEIDVFDREKVFIDEHLRRVVERFPTLKVVFEHITTGEAVQFVNEASANVAATITAHHLLYNRNHMLVGGIRPHFYCLPILKRNTHQASLLDAATSGSGKFFLGTDSAPHAQHAKENACGCAGCYTAYAAIELYAEAFEQRNALDKLEGFASLHGPAFYGLPANQDTITLVRDEWTAPASLPFGELTVIPLRAGEKLRWRLEEHA.

Zn(2+) contacts are provided by H14 and H16. Substrate contacts are provided by residues 16–18 and N42; that span reads HLR. Zn(2+) is bound by residues K100, H137, and H175. Position 100 is an N6-carboxylysine (K100). Position 137 (H137) interacts with substrate. L220 provides a ligand contact to substrate. A Zn(2+)-binding site is contributed by D248. D248 is an active-site residue. Residues H252 and A264 each coordinate substrate.

Belongs to the metallo-dependent hydrolases superfamily. DHOase family. Class II DHOase subfamily. Homodimer. Requires Zn(2+) as cofactor.

It catalyses the reaction (S)-dihydroorotate + H2O = N-carbamoyl-L-aspartate + H(+). The protein operates within pyrimidine metabolism; UMP biosynthesis via de novo pathway; (S)-dihydroorotate from bicarbonate: step 3/3. Functionally, catalyzes the reversible cyclization of carbamoyl aspartate to dihydroorotate. In Pseudomonas savastanoi pv. phaseolicola (strain 1448A / Race 6) (Pseudomonas syringae pv. phaseolicola (strain 1448A / Race 6)), this protein is Dihydroorotase.